Reading from the N-terminus, the 303-residue chain is Putative band 7 family protein R614 (303 aa).

It belongs to the band 7/mec-2 family.

The polypeptide is Putative band 7 family protein R614 (Acanthamoeba polyphaga (Amoeba)).